Here is a 484-residue protein sequence, read N- to C-terminus: Regulator of G-protein signaling 9 (484 aa).

In terms of domain architecture, DEP spans 30–105; sequence PDTGVRVQNQ…PDSSLYRFQT (76 aa). In terms of domain architecture, G protein gamma spans 219 to 280; the sequence is VVSVRKEIMY…ITDDTQFWDL (62 aa). An RGS domain is found at 299–414; that stretch reads NFSELIRDPK…LKSPIYKEML (116 aa). Residues 460-484 form a disordered region; it reads TTVDITQVMSKLDRRSQLRKEPPPK. Over residues 470-484 the composition is skewed to basic and acidic residues; it reads KLDRRSQLRKEPPPK.

In terms of assembly, heterodimer with GNB5. Interacts with RGS7BP, leading to regulate the subcellular location of the heterodimer formed with GNB5. Component of the RGS9-1-Gbeta5 complex composed of RGS9 (RGS9-1), Gbeta5 (GNB5) and RGS9BP. Interacts with PDE6G and GNAT1. Post-translationally, phosphorylation is decreased by light exposition. As to expression, photoreceptor outer segments.

It is found in the membrane. Its function is as follows. Inhibits signal transduction by increasing the GTPase activity of G protein alpha subunits thereby driving them into their inactive GDP-bound form. Binds to GNAT1. Involved in phototransduction; key element in the recovery phase of visual transduction. This is Regulator of G-protein signaling 9 (RGS9) from Bos taurus (Bovine).